A 484-amino-acid polypeptide reads, in one-letter code: tRNA sulfurtransferase (484 aa).

Residues 63–167 form the THUMP domain; it reads EAFGERLACI…NDNLYLIDKR (105 aa). Residues 185-186, Lys-267, Gly-289, and Gln-298 contribute to the ATP site; that span reads LI. Cys-346 and Cys-458 are oxidised to a cystine. One can recognise a Rhodanese domain in the interval 406–484; it reads INANEIIIDV…GYTNVKVYRP (79 aa). Residue Cys-458 is the Cysteine persulfide intermediate of the active site.

It belongs to the ThiI family.

The protein resides in the cytoplasm. It carries out the reaction [ThiI sulfur-carrier protein]-S-sulfanyl-L-cysteine + a uridine in tRNA + 2 reduced [2Fe-2S]-[ferredoxin] + ATP + H(+) = [ThiI sulfur-carrier protein]-L-cysteine + a 4-thiouridine in tRNA + 2 oxidized [2Fe-2S]-[ferredoxin] + AMP + diphosphate. The enzyme catalyses [ThiS sulfur-carrier protein]-C-terminal Gly-Gly-AMP + S-sulfanyl-L-cysteinyl-[cysteine desulfurase] + AH2 = [ThiS sulfur-carrier protein]-C-terminal-Gly-aminoethanethioate + L-cysteinyl-[cysteine desulfurase] + A + AMP + 2 H(+). It participates in cofactor biosynthesis; thiamine diphosphate biosynthesis. Its function is as follows. Catalyzes the ATP-dependent transfer of a sulfur to tRNA to produce 4-thiouridine in position 8 of tRNAs, which functions as a near-UV photosensor. Also catalyzes the transfer of sulfur to the sulfur carrier protein ThiS, forming ThiS-thiocarboxylate. This is a step in the synthesis of thiazole, in the thiamine biosynthesis pathway. The sulfur is donated as persulfide by IscS. This chain is tRNA sulfurtransferase, found in Shewanella halifaxensis (strain HAW-EB4).